Reading from the N-terminus, the 1217-residue chain is ATP-dependent helicase/nuclease subunit A (1217 aa).

The 466-residue stretch at 10-475 (VIWTDAQWQS…IDLSQNFRSR (466 aa)) folds into the UvrD-like helicase ATP-binding domain. 31–38 (AAAGSGKT) is a binding site for ATP. The UvrD-like helicase C-terminal domain maps to 476 to 786 (KEVLSTTNYI…RMMTIHSSKG (311 aa)).

The protein belongs to the helicase family. AddA subfamily. As to quaternary structure, heterodimer of AddA and AddB/RexB. Mg(2+) serves as cofactor.

It catalyses the reaction Couples ATP hydrolysis with the unwinding of duplex DNA by translocating in the 3'-5' direction.. The catalysed reaction is ATP + H2O = ADP + phosphate + H(+). The heterodimer acts as both an ATP-dependent DNA helicase and an ATP-dependent, dual-direction single-stranded exonuclease. Recognizes the chi site generating a DNA molecule suitable for the initiation of homologous recombination. The AddA nuclease domain is required for chi fragment generation; this subunit has the helicase and 3' -&gt; 5' nuclease activities. The sequence is that of ATP-dependent helicase/nuclease subunit A from Staphylococcus aureus (strain MRSA252).